We begin with the raw amino-acid sequence, 355 residues long: Heterogeneous nuclear ribonucleoprotein D0 (355 aa).

The disordered stretch occupies residues 1 to 92 (MSEEQFGGDG…SPRHSEAATA (92 aa)). Position 2 is an N-acetylserine (serine 2). Composition is skewed to low complexity over residues 11–20 (AAAAATAAVG) and 27–42 (EGAM…AAAG). Residues 43–58 (SGAGTGGGTASGGTEG) show a composition bias toward gly residues. Residues 64-73 (EGAKIDASKN) show a composition bias toward basic and acidic residues. The residue at position 71 (serine 71) is a Phosphoserine. Lysine 72 participates in a covalent cross-link: Glycyl lysine isopeptide (Lys-Gly) (interchain with G-Cter in SUMO2). A phosphoserine mark is found at serine 80, serine 82, and serine 83. Position 91 is a phosphothreonine (threonine 91). RRM domains are found at residues 97 to 179 (WKMF…KTKE) and 182 to 261 (KKIF…MSKE). The residue at position 119 (lysine 119) is an N6-methyllysine. A Phosphothreonine modification is found at threonine 127. Lysine 129 is covalently cross-linked (Glycyl lysine isopeptide (Lys-Gly) (interchain with G-Cter in SUMO2)). N6-acetyllysine is present on lysine 165. Serine 190 carries the post-translational modification Phosphoserine. A Phosphothreonine modification is found at threonine 193. A Glycyl lysine isopeptide (Lys-Gly) (interchain with G-Cter in SUMO2) cross-link involves residue lysine 197. Residues lysine 243 and lysine 251 each carry the N6-acetyllysine modification. Tyrosine 263 is subject to Omega-N-methylarginine. At serine 271 the chain carries Phosphoserine. Arginine 272 is modified (omega-N-methylarginine). N6-acetyllysine is present on glycine 273. 3 positions are modified to omega-N-methylarginine: arginine 278, arginine 280, and arginine 282. The residue at position 292 (glutamine 292) is an N6-acetyllysine. Arginine 345 carries the post-translational modification Asymmetric dimethylarginine; alternate. Arginine 345 is subject to Dimethylated arginine; alternate. Arginine 345 is subject to Omega-N-methylarginine; alternate.

Identified in a IGF2BP1-dependent mRNP granule complex containing untranslated mRNAs. Part of a complex associated with the FOS mCRD domain and consisting of PABPC1, PAIP1, CSDE1/UNR and SYNCRIP. Interacts with IGF2BP2. Interacts with GTPBP1. Interacts with EIF4G1; the interaction requires RNA. Interacts with EIF3B and RPS3. Post-translationally, arg-345 is dimethylated, probably to asymmetric dimethylarginine. Methylated by PRMT1, in an insulin-dependent manner. The PRMT1-mediated methylation regulates tyrosine phosphorylation.

It localises to the nucleus. It is found in the cytoplasm. In terms of biological role, binds with high affinity to RNA molecules that contain AU-rich elements (AREs) found within the 3'-UTR of many proto-oncogenes and cytokine mRNAs. Also binds to double- and single-stranded DNA sequences in a specific manner and functions a transcription factor. Each of the RNA-binding domains specifically can bind solely to a single-stranded non-monotonous 5'-UUAG-3' sequence and also weaker to the single-stranded 5'-TTAGGG-3' telomeric DNA repeat. Binds RNA oligonucleotides with 5'-UUAGGG-3' repeats more tightly than the telomeric single-stranded DNA 5'-TTAGGG-3' repeats. Binding of RRM1 to DNA inhibits the formation of DNA quadruplex structure which may play a role in telomere elongation. May be involved in translationally coupled mRNA turnover. Implicated with other RNA-binding proteins in the cytoplasmic deadenylation/translational and decay interplay of the FOS mRNA mediated by the major coding-region determinant of instability (mCRD) domain. May play a role in the regulation of the rhythmic expression of circadian clock core genes. Directly binds to the 3'UTR of CRY1 mRNA and induces CRY1 rhythmic translation. May also be involved in the regulation of PER2 translation. The protein is Heterogeneous nuclear ribonucleoprotein D0 (HNRNPD) of Homo sapiens (Human).